A 163-amino-acid chain; its full sequence is MSLELHFAVSQFLYKKAELCDNYDWDAYIDLYDEDSEYHIPQWIDDHNYVQDPNQGLSYIYYEDRSGLEDRVFRIRTGKAASATPLPRTQHNIHNVQVKTLEDGLIEAKVSWRTLYNRQGLEGCFYGRATYVLRPTEDSFRIRRQHSVLLNDKIDSVLDFYHV.

Belongs to the bacterial ring-hydroxylating dioxygenase beta subunit family. The anthranilate dioxygenase (AntDO) multicomponent enzyme system is composed of an oxygenase component and a NADH:acceptor reductase component (AntC). The oxygenase component is a heterohexamer of 3 large (AntA) and 3 small (AntB) subunits.

It catalyses the reaction anthranilate + NADH + O2 + 3 H(+) = catechol + NH4(+) + CO2 + NAD(+). It carries out the reaction anthranilate + NADPH + O2 + 3 H(+) = catechol + NH4(+) + CO2 + NADP(+). It participates in aromatic compound metabolism; anthranilate degradation via hydroxylation; catechol from anthranilate: step 1/1. In terms of biological role, component of anthranilate dioxygenase multicomponent enzyme system which catalyzes the incorporation of both atoms of molecular oxygen into anthranilate to form catechol. This is Anthranilate 1,2-dioxygenase small subunit from Acinetobacter baylyi (strain ATCC 33305 / BD413 / ADP1).